Reading from the N-terminus, the 481-residue chain is DNA gyrase subunit B (481 aa).

The region spanning 323–442 (CELYLVEGDS…QGYVYIAQPP (120 aa)) is the Toprim domain. Glu-329, Asp-407, and Asp-409 together coordinate Mg(2+).

It belongs to the type II topoisomerase GyrB family. In terms of assembly, heterotetramer, composed of two GyrA and two GyrB chains. In the heterotetramer, GyrA contains the active site tyrosine that forms a transient covalent intermediate with DNA, while GyrB binds cofactors and catalyzes ATP hydrolysis. The cofactor is Mg(2+). It depends on Mn(2+) as a cofactor. Requires Ca(2+) as cofactor.

It is found in the cytoplasm. It catalyses the reaction ATP-dependent breakage, passage and rejoining of double-stranded DNA.. Functionally, a type II topoisomerase that negatively supercoils closed circular double-stranded (ds) DNA in an ATP-dependent manner to modulate DNA topology and maintain chromosomes in an underwound state. Negative supercoiling favors strand separation, and DNA replication, transcription, recombination and repair, all of which involve strand separation. Also able to catalyze the interconversion of other topological isomers of dsDNA rings, including catenanes and knotted rings. Type II topoisomerases break and join 2 DNA strands simultaneously in an ATP-dependent manner. In Chitinophaga japonensis (Flexibacter japonensis), this protein is DNA gyrase subunit B (gyrB).